The following is a 192-amino-acid chain: Small ribosomal subunit protein uS5 (192 aa).

The segment at Met1–Asp21 is disordered. One can recognise an S5 DRBM domain in the interval Phe24 to Val87.

Belongs to the universal ribosomal protein uS5 family. In terms of assembly, part of the 30S ribosomal subunit. Contacts proteins S4 and S8.

With S4 and S12 plays an important role in translational accuracy. Functionally, located at the back of the 30S subunit body where it stabilizes the conformation of the head with respect to the body. This is Small ribosomal subunit protein uS5 from Afipia carboxidovorans (strain ATCC 49405 / DSM 1227 / KCTC 32145 / OM5) (Oligotropha carboxidovorans).